A 449-amino-acid polypeptide reads, in one-letter code: Bifunctional protein GlmU (449 aa).

The pyrophosphorylase stretch occupies residues 1–226 (MVAVAILAAG…FQEISGINDR (226 aa)). UDP-N-acetyl-alpha-D-glucosamine contacts are provided by residues 7 to 10 (LAAG), Lys21, Gln73, and 78 to 79 (GT). Residue Asp103 participates in Mg(2+) binding. Gly140, Glu155, Asn170, and Asn224 together coordinate UDP-N-acetyl-alpha-D-glucosamine. Asn224 is a Mg(2+) binding site. The linker stretch occupies residues 227–247 (FQLSAAYEILQDRIKEKWMKA). The tract at residues 248–449 (GVMIHQPDTV…KEIKGWRLQS (202 aa)) is N-acetyltransferase. The UDP-N-acetyl-alpha-D-glucosamine site is built by Arg329 and Lys347. His359 (proton acceptor) is an active-site residue. UDP-N-acetyl-alpha-D-glucosamine is bound by residues Tyr362 and Asn373. Acetyl-CoA contacts are provided by residues Ala376, 382-383 (NY), Ala419, and Arg436.

The protein in the N-terminal section; belongs to the N-acetylglucosamine-1-phosphate uridyltransferase family. In the C-terminal section; belongs to the transferase hexapeptide repeat family. In terms of assembly, homotrimer. Mg(2+) is required as a cofactor.

The protein localises to the cytoplasm. The enzyme catalyses alpha-D-glucosamine 1-phosphate + acetyl-CoA = N-acetyl-alpha-D-glucosamine 1-phosphate + CoA + H(+). It carries out the reaction N-acetyl-alpha-D-glucosamine 1-phosphate + UTP + H(+) = UDP-N-acetyl-alpha-D-glucosamine + diphosphate. The protein operates within nucleotide-sugar biosynthesis; UDP-N-acetyl-alpha-D-glucosamine biosynthesis; N-acetyl-alpha-D-glucosamine 1-phosphate from alpha-D-glucosamine 6-phosphate (route II): step 2/2. Its pathway is nucleotide-sugar biosynthesis; UDP-N-acetyl-alpha-D-glucosamine biosynthesis; UDP-N-acetyl-alpha-D-glucosamine from N-acetyl-alpha-D-glucosamine 1-phosphate: step 1/1. It functions in the pathway bacterial outer membrane biogenesis; LPS lipid A biosynthesis. In terms of biological role, catalyzes the last two sequential reactions in the de novo biosynthetic pathway for UDP-N-acetylglucosamine (UDP-GlcNAc). The C-terminal domain catalyzes the transfer of acetyl group from acetyl coenzyme A to glucosamine-1-phosphate (GlcN-1-P) to produce N-acetylglucosamine-1-phosphate (GlcNAc-1-P), which is converted into UDP-GlcNAc by the transfer of uridine 5-monophosphate (from uridine 5-triphosphate), a reaction catalyzed by the N-terminal domain. The protein is Bifunctional protein GlmU of Picosynechococcus sp. (strain ATCC 27264 / PCC 7002 / PR-6) (Agmenellum quadruplicatum).